Consider the following 311-residue polypeptide: Putative dihydroorotate dehydrogenase A (fumarate) (311 aa).

Substrate contacts are provided by residues Lys-45, 69–73 (NSMGL), and Asn-128. Position 45–46 (45–46 (KT)) interacts with FMN. FMN is bound at residue Asn-128. Cys-131 functions as the Nucleophile in the catalytic mechanism. FMN-binding residues include Lys-165 and Val-193. Residue 194-195 (NS) coordinates substrate. Residues Gly-220, 248–249 (GG), and 270–271 (GT) each bind FMN.

It belongs to the dihydroorotate dehydrogenase family. Type 1 subfamily. In terms of assembly, homodimer. FMN serves as cofactor.

The protein resides in the cytoplasm. It carries out the reaction (S)-dihydroorotate + fumarate = orotate + succinate. The protein operates within pyrimidine metabolism; UMP biosynthesis via de novo pathway. In terms of biological role, catalyzes the conversion of dihydroorotate to orotate with fumarate as the electron acceptor. This Streptococcus pyogenes serotype M3 (strain SSI-1) protein is Putative dihydroorotate dehydrogenase A (fumarate) (pyrD).